A 477-amino-acid polypeptide reads, in one-letter code: UDP-N-acetylmuramate--L-alanine ligase (477 aa).

122–128 (GTHGKTT) provides a ligand contact to ATP.

Belongs to the MurCDEF family.

The protein localises to the cytoplasm. The enzyme catalyses UDP-N-acetyl-alpha-D-muramate + L-alanine + ATP = UDP-N-acetyl-alpha-D-muramoyl-L-alanine + ADP + phosphate + H(+). It functions in the pathway cell wall biogenesis; peptidoglycan biosynthesis. In terms of biological role, cell wall formation. The protein is UDP-N-acetylmuramate--L-alanine ligase of Xanthomonas axonopodis pv. citri (strain 306).